The sequence spans 292 residues: Ribosomal protein L11 methyltransferase (292 aa).

Residues Thr144, Gly165, Asp187, and Asn229 each coordinate S-adenosyl-L-methionine.

The protein belongs to the methyltransferase superfamily. PrmA family.

It localises to the cytoplasm. The enzyme catalyses L-lysyl-[protein] + 3 S-adenosyl-L-methionine = N(6),N(6),N(6)-trimethyl-L-lysyl-[protein] + 3 S-adenosyl-L-homocysteine + 3 H(+). Its function is as follows. Methylates ribosomal protein L11. The protein is Ribosomal protein L11 methyltransferase of Pseudomonas fluorescens (strain SBW25).